We begin with the raw amino-acid sequence, 126 residues long: NADH-quinone oxidoreductase subunit A (126 aa).

Helical transmembrane passes span Phe14–Phe34, Phe66–Trp86, and Ile96–Val116.

It belongs to the complex I subunit 3 family. As to quaternary structure, NDH-1 is composed of 13 different subunits. Subunits NuoA, H, J, K, L, M, N constitute the membrane sector of the complex.

It is found in the cell membrane. The catalysed reaction is a quinone + NADH + 5 H(+)(in) = a quinol + NAD(+) + 4 H(+)(out). Functionally, NDH-1 shuttles electrons from NADH, via FMN and iron-sulfur (Fe-S) centers, to quinones in the respiratory chain. The immediate electron acceptor for the enzyme in this species is believed to be ubiquinone. Couples the redox reaction to proton translocation (for every two electrons transferred, four hydrogen ions are translocated across the cytoplasmic membrane), and thus conserves the redox energy in a proton gradient. This Buchnera aphidicola subsp. Schizaphis graminum (strain Sg) protein is NADH-quinone oxidoreductase subunit A.